The chain runs to 287 residues: Ribosomal RNA small subunit methyltransferase A (287 aa).

Positions 28, 30, 55, 76, 101, and 125 each coordinate S-adenosyl-L-methionine.

The protein belongs to the class I-like SAM-binding methyltransferase superfamily. rRNA adenine N(6)-methyltransferase family. RsmA subfamily.

The protein resides in the cytoplasm. The enzyme catalyses adenosine(1518)/adenosine(1519) in 16S rRNA + 4 S-adenosyl-L-methionine = N(6)-dimethyladenosine(1518)/N(6)-dimethyladenosine(1519) in 16S rRNA + 4 S-adenosyl-L-homocysteine + 4 H(+). Specifically dimethylates two adjacent adenosines (A1518 and A1519) in the loop of a conserved hairpin near the 3'-end of 16S rRNA in the 30S particle. May play a critical role in biogenesis of 30S subunits. This Alkaliphilus metalliredigens (strain QYMF) protein is Ribosomal RNA small subunit methyltransferase A.